The chain runs to 657 residues: uncharacterized protein (657 aa).

Residues 1 to 17 form the signal peptide; the sequence is MACVLACVAVLIGAASA.

This is an uncharacterized protein from Orgyia pseudotsugata (Douglas-fir tussock moth).